The primary structure comprises 319 residues: Cytochrome f (319 aa).

A signal peptide spans methionine 1 to alanine 34. Tyrosine 35, cysteine 55, cysteine 58, and histidine 59 together coordinate heme. A helical membrane pass occupies residues glycine 287–leucine 304.

This sequence belongs to the cytochrome f family. As to quaternary structure, the 4 large subunits of the cytochrome b6-f complex are cytochrome b6, subunit IV (17 kDa polypeptide, petD), cytochrome f and the Rieske protein, while the 4 small subunits are PetG, PetL, PetM and PetN. The complex functions as a dimer. Heme is required as a cofactor.

Its subcellular location is the plastid. The protein localises to the chloroplast thylakoid membrane. In terms of biological role, component of the cytochrome b6-f complex, which mediates electron transfer between photosystem II (PSII) and photosystem I (PSI), cyclic electron flow around PSI, and state transitions. The polypeptide is Cytochrome f (petA) (Pinus thunbergii (Japanese black pine)).